We begin with the raw amino-acid sequence, 397 residues long: Succinate--CoA ligase [ADP-forming] subunit beta (397 aa).

One can recognise an ATP-grasp domain in the interval 9 to 254 (KALLKSFGAP…ETEQDAKELE (246 aa)). ATP is bound by residues Lys-46, 53 to 55 (GRG), Glu-109, Ala-112, and Glu-117. Mg(2+) is bound by residues Asn-209 and Asp-223. Substrate-binding positions include Asn-274 and 331 to 333 (GIM).

Belongs to the succinate/malate CoA ligase beta subunit family. Heterotetramer of two alpha and two beta subunits. Mg(2+) is required as a cofactor.

It carries out the reaction succinate + ATP + CoA = succinyl-CoA + ADP + phosphate. It catalyses the reaction GTP + succinate + CoA = succinyl-CoA + GDP + phosphate. It participates in carbohydrate metabolism; tricarboxylic acid cycle; succinate from succinyl-CoA (ligase route): step 1/1. Succinyl-CoA synthetase functions in the citric acid cycle (TCA), coupling the hydrolysis of succinyl-CoA to the synthesis of either ATP or GTP and thus represents the only step of substrate-level phosphorylation in the TCA. The beta subunit provides nucleotide specificity of the enzyme and binds the substrate succinate, while the binding sites for coenzyme A and phosphate are found in the alpha subunit. The chain is Succinate--CoA ligase [ADP-forming] subunit beta from Hyphomonas neptunium (strain ATCC 15444).